We begin with the raw amino-acid sequence, 398 residues long: MTQLFDTLGFIDTSAARTGAAAATHDAAATSTEPAGPAGAAAVSLEQVGKVFATPRGQAAALRDVTLDVRRGEVFGIIGRSGAGKSTLLRLVNGLERPSSGRVRVQGVDVGALDEDGLVALRRRTGMVFQHFNLLSAKTVFENVALPLKIAGVPKAERVRKVEALLELVGLAAKRDAYPASLSGGQKQRVGIARALVHDPEVLLCDEATSALDPETTQSILALLADINRRLGLTIVLITHEMEVIRAVCDTVAVIEQGEVVETGPVWRVFGDPRHGATRALLSTLVHDLPAELAARVQPLPEQAALPDGAQVVLDVRYTGESGGEPDVGALAAALGGSVRFLHGGIERIQGHAQGRLVIAAALRAEDAGQSTARGGAVAALLERARRHANHAEVLGYV.

The ABC transporter domain occupies 43–282; sequence VSLEQVGKVF…PRHGATRALL (240 aa). Residue 79-86 coordinates ATP; the sequence is GRSGAGKS.

The protein belongs to the ABC transporter superfamily. Methionine importer (TC 3.A.1.24) family. The complex is composed of two ATP-binding proteins (MetN), two transmembrane proteins (MetI) and a solute-binding protein (MetQ).

Its subcellular location is the cell inner membrane. It carries out the reaction L-methionine(out) + ATP + H2O = L-methionine(in) + ADP + phosphate + H(+). The enzyme catalyses D-methionine(out) + ATP + H2O = D-methionine(in) + ADP + phosphate + H(+). Functionally, part of the ABC transporter complex MetNIQ involved in methionine import. Responsible for energy coupling to the transport system. In Burkholderia lata (strain ATCC 17760 / DSM 23089 / LMG 22485 / NCIMB 9086 / R18194 / 383), this protein is Methionine import ATP-binding protein MetN 2.